The chain runs to 1960 residues: Exophilin-5 (1960 aa).

Positions 7–63 constitute a RabBD domain; it reads GFDFSFLNEEEARKILQVLERNEELRRAEKDRISKLQKTKRDIRWLQGATGEWFEEI. Composition is skewed to polar residues over residues 325–334, 342–366, and 635–645; these read ASPATGSFTA, DTQN…LSSI, and SQSSSFPDSTA. Disordered regions lie at residues 325 to 366, 616 to 645, 672 to 720, 734 to 835, and 910 to 976; these read ASPA…LSSI, TPAS…DSTA, HSTD…TGLP, DFQN…SSNT, and FSRS…KGRV. Residues 673–682 are compositionally biased toward low complexity; it reads STDSLSLTDT. The span at 692 to 707 shows a compositional bias: basic and acidic residues; the sequence is NSEKDMDVSVSKDEQL. 2 positions are modified to phosphoserine: Ser-799 and Ser-802. Composition is skewed to polar residues over residues 808–835 and 910–920; these read ESGT…SSNT and FSRSLSDQDPG. Positions 921–932 are enriched in basic and acidic residues; the sequence is QEQREEKDKATK. Over residues 933–945 the composition is skewed to polar residues; that stretch reads SQDNQLAVNSTDN. The residue at position 1027 (Ser-1027) is a Phosphoserine. The tract at residues 1035 to 1095 is disordered; the sequence is QESKGTVASV…PKATKKMTDM (61 aa). The span at 1062 to 1074 shows a compositional bias: polar residues; the sequence is GKSTSDKPSSPES. Phosphoserine is present on residues Ser-1083 and Ser-1117. Disordered regions lie at residues 1291 to 1375, 1389 to 1493, and 1510 to 1759; these read AQVQ…LSRE, PLLH…DSES, and EAQP…EPHL. Basic and acidic residues predominate over residues 1318–1336; sequence PESKDVSQLPDRETSKSTL. Residues 1356 to 1365 show a composition bias toward polar residues; that stretch reads KEISPSNVSK. Over residues 1392 to 1403 the composition is skewed to basic and acidic residues; sequence HQEKGAGKEHTK. Polar residues-rich tracts occupy residues 1470–1493 and 1520–1533; these read RETS…DSES and SEAS…TNTA. Ser-1493 carries the post-translational modification Phosphoserine. Basic and acidic residues-rich tracts occupy residues 1534 to 1546 and 1561 to 1571; these read EMRK…HMLT and TNTDETKDRYS. Basic residues predominate over residues 1572–1586; it reads GKHRLAAISKASKRI. The segment covering 1637–1657 has biased composition (polar residues); sequence ESSQMNVDKSETLLQETTVSS. A phosphoserine mark is found at Ser-1724, Ser-1739, Ser-1789, and Ser-1819. Positions 1732–1741 are enriched in polar residues; that stretch reads TQKSTINSHC. Disordered stretches follow at residues 1828-1847 and 1906-1960; these read ESES…STSS and VNSP…ESEL. Over residues 1939–1950 the composition is skewed to acidic residues; that stretch reads WDTDTTTDDEYY. The span at 1951-1960 shows a compositional bias: basic and acidic residues; the sequence is LDEKDKESEL.

Interacts with RAB27A.

May act as Rab effector protein and play a role in vesicle trafficking. This is Exophilin-5 from Mus musculus (Mouse).